The primary structure comprises 238 residues: Demethylmenaquinone methyltransferase (238 aa).

S-adenosyl-L-methionine contacts are provided by residues Thr-65, Asp-85, and 109–110 (DA).

Belongs to the class I-like SAM-binding methyltransferase superfamily. MenG/UbiE family.

The catalysed reaction is a 2-demethylmenaquinol + S-adenosyl-L-methionine = a menaquinol + S-adenosyl-L-homocysteine + H(+). It participates in quinol/quinone metabolism; menaquinone biosynthesis; menaquinol from 1,4-dihydroxy-2-naphthoate: step 2/2. In terms of biological role, methyltransferase required for the conversion of demethylmenaquinol (DMKH2) to menaquinol (MKH2). In Roseiflexus sp. (strain RS-1), this protein is Demethylmenaquinone methyltransferase.